Here is a 206-residue protein sequence, read N- to C-terminus: Superoxide dismutase [Mn] (206 aa).

Positions 27, 82, 168, and 172 each coordinate Mn(2+).

Belongs to the iron/manganese superoxide dismutase family. In terms of assembly, homodimer. Requires Mn(2+) as cofactor.

The enzyme catalyses 2 superoxide + 2 H(+) = H2O2 + O2. Destroys superoxide anion radicals which are normally produced within the cells and which are toxic to biological systems. The protein is Superoxide dismutase [Mn] (sodA) of Escherichia coli O157:H7.